We begin with the raw amino-acid sequence, 966 residues long: Mitogen-activated protein kinase kinase kinase 13 (966 aa).

Disordered regions lie at residues 1 to 22 (MANF…SESK) and 93 to 112 (SEMA…STSG). Residues 96 to 112 (AVSQGNSNTVDAESTSG) show a composition bias toward polar residues. The Protein kinase domain maps to 168-409 (ISELQWLGSG…FRQTLMHLDI (242 aa)). ATP is bound by residues 174–182 (LGSGAQGAV) and Lys195. Asp279 serves as the catalytic Proton acceptor. Leucine-zipper regions lie at residues 433-454 (VKKH…DEEL) and 486-507 (LSAI…EQAV). Disordered stretches follow at residues 534-652 (KRKG…SQSH), 744-834 (DIPS…RRQR), 846-873 (STFS…PDEL), and 887-906 (DLLS…SDGL). Positions 567–581 (SPLSGSPKMSTSSSK) are enriched in low complexity. The segment covering 582–594 (SRYRSKPRHRRGN) has biased composition (basic residues). Composition is skewed to polar residues over residues 609 to 629 (QPAQ…SQYP) and 781 to 795 (FSSC…TSHL). Over residues 814 to 827 (DSSEEEEGEVDSEV) the composition is skewed to acidic residues. The segment at 815–828 (SSEEEEGEVDSEVE) is acidic. The span at 846–855 (STFSSENFSV) shows a compositional bias: polar residues.

This sequence belongs to the protein kinase superfamily. STE Ser/Thr protein kinase family. MAP kinase kinase kinase subfamily. As to quaternary structure, homodimer; forms dimers through the leucine-zipper motif. Interacts with the C-terminus of MAPK8IP1 through the kinase catalytic domain. Binds PRDX3. Associates with the IKK complex through the kinase domain. Mg(2+) serves as cofactor. Post-translationally, autophosphorylated on serine and threonine residues.

It localises to the cytoplasm. The protein localises to the membrane. The enzyme catalyses L-seryl-[protein] + ATP = O-phospho-L-seryl-[protein] + ADP + H(+). It catalyses the reaction L-threonyl-[protein] + ATP = O-phospho-L-threonyl-[protein] + ADP + H(+). Activated by autophosphorylation and homodimerization. Activates the JUN N-terminal pathway through activation of the MAP kinase kinase MAP2K7. Acts synergistically with PRDX3 to regulate the activation of NF-kappa-B in the cytosol. This activation is kinase-dependent and involves activating the IKK complex, the IKBKB-containing complex that phosphorylates inhibitors of NF-kappa-B. This chain is Mitogen-activated protein kinase kinase kinase 13, found in Pongo abelii (Sumatran orangutan).